We begin with the raw amino-acid sequence, 194 residues long: Peptidyl-tRNA hydrolase (194 aa).

Y17 contributes to the tRNA binding site. H22 (proton acceptor) is an active-site residue. TRNA is bound by residues Y68, N70, and N116.

Belongs to the PTH family. In terms of assembly, monomer.

Its subcellular location is the cytoplasm. The catalysed reaction is an N-acyl-L-alpha-aminoacyl-tRNA + H2O = an N-acyl-L-amino acid + a tRNA + H(+). In terms of biological role, hydrolyzes ribosome-free peptidyl-tRNAs (with 1 or more amino acids incorporated), which drop off the ribosome during protein synthesis, or as a result of ribosome stalling. Functionally, catalyzes the release of premature peptidyl moieties from peptidyl-tRNA molecules trapped in stalled 50S ribosomal subunits, and thus maintains levels of free tRNAs and 50S ribosomes. The protein is Peptidyl-tRNA hydrolase of Pseudomonas entomophila (strain L48).